The following is a 1336-amino-acid chain: Probable ATP-dependent DNA helicase HFM1 (1336 aa).

In terms of domain architecture, Helicase ATP-binding spans 159–347 (EHLLYSDRNF…WLSDENSPGV (189 aa)). An ATP-binding site is contributed by 172–179 (APTGSGKT). The short motif at 280–283 (DEVH) is the DEAH box element. The Helicase C-terminal domain maps to 388 to 589 (NIIQTYSDGR…DVKVALEWIR (202 aa)). The region spanning 646-961 (PTETGKLMAL…GLDIQQSFNI (316 aa)) is the SEC63 domain. Residues 1016-1031 (CNHNCKNKDACGHECC) form a C4-type zinc finger.

Belongs to the helicase family. SKI2 subfamily. Zn(2+) serves as cofactor.

The catalysed reaction is Couples ATP hydrolysis with the unwinding of duplex DNA by translocating in the 3'-5' direction.. It carries out the reaction ATP + H2O = ADP + phosphate + H(+). Functionally, required for crossover formation and complete synapsis of homologous chromosomes during meiosis. This chain is Probable ATP-dependent DNA helicase HFM1 (hfm1), found in Xenopus tropicalis (Western clawed frog).